The primary structure comprises 365 residues: Coxsackievirus and adenovirus receptor homolog (365 aa).

Residues 1–19 (MELLLRFLLLCGVADFTRG) form the signal peptide. Ig-like C2-type domains follow at residues 20–136 (LSIT…IQLT) and 141–228 (PSGI…LRLD). At 20-238 (LSITTPEQMI…VVPPSNRAGT (219 aa)) the chain is on the extracellular side. 3 cysteine pairs are disulfide-bonded: Cys-41–Cys-120, Cys-146–Cys-223, and Cys-162–Cys-212. The N-linked (GlcNAc...) asparagine glycan is linked to Asn-106. Residues 239–259 (IAGAVIGTLLALVLIALIVFC) form a helical membrane-spanning segment. S-palmitoyl cysteine attachment occurs at residues Cys-259 and Cys-260. At 260–365 (CHKKRREEKY…PAQSKDGSIV (106 aa)) the chain is on the cytoplasmic side. Residues 269 to 282 (YEKEVHHDIREDVP) are compositionally biased toward basic and acidic residues. The disordered stretch occupies residues 269–343 (YEKEVHHDIR…TLPPAKVAAP (75 aa)). Residues 286–322 (SRTSTARSYIGSNHSSLGSMSPSNMEGYSKTQYNQVP) are compositionally biased toward polar residues. Ser-297, Ser-304, Ser-306, Ser-323, Ser-332, and Ser-363 each carry phosphoserine. Residues 360–365 (KDGSIV) carry the PDZ-binding motif.

Monomer. May form homodimers. Interacts with LNX, MAGI1, DLG4, PRKCABP, TJP1 and CTNNB1. Interacts with MPDZ; recruits MPDZ to intercellular contact sites. Interacts with JAML (homodimeric form). N-glycosylated. In terms of processing, palmitoylated on Cys-259 and/or Cys-260; required for proper localization to the plasma membrane.

It is found in the cell membrane. The protein localises to the basolateral cell membrane. It localises to the cell junction. The protein resides in the tight junction. Its subcellular location is the adherens junction. Its function is as follows. Component of the epithelial apical junction complex that may function as a homophilic cell adhesion molecule and is essential for tight junction integrity. Also involved in transepithelial migration of leukocytes through adhesive interactions with JAML a transmembrane protein of the plasma membrane of leukocytes. The interaction between both receptors also mediates the activation of gamma-delta T-cells, a subpopulation of T-cells residing in epithelia and involved in tissue homeostasis and repair. Upon epithelial CXADR-binding, JAML induces downstream cell signaling events in gamma-delta T-cells through PI3-kinase and MAP kinases. It results in proliferation and production of cytokines and growth factors by T-cells that in turn stimulate epithelial tissues repair. This Bos taurus (Bovine) protein is Coxsackievirus and adenovirus receptor homolog (CXADR).